Here is a 360-residue protein sequence, read N- to C-terminus: POU domain, class 5, transcription factor 1 (360 aa).

Disordered regions lie at residues 1–50 (MAGH…IGPG) and 87–118 (QGGLETPQPEGEAGAGVESNSEGASPEPCAAP). Residues 4-12 (HLASDFAFS) carry the 9aaTAD motif. Residues 41-50 (PPGGSGIGPG) show a composition bias toward gly residues. Serine 111 carries the phosphoserine; by MAPK modification. Lysine 123 is covalently cross-linked (Glycyl lysine isopeptide (Lys-Gly) (interchain with G-Cter in SUMO)). A POU-specific domain is found at 138–212 (DIKALQKDLE…LLQKWVEEAD (75 aa)). Arginine 157 and glutamine 164 together coordinate DNA. DNA-binding stretches follow at residues 180–186 (SQTTICR) and 193–196 (SFKN). Positions 230-289 (RKRKRTSIENRVRGNLESMFLQCPKPTLQQISHIAQQLGLEKDVVRVWFCNRRQKGKRSS) form a DNA-binding region, homeobox. At threonine 235 the chain carries Phosphothreonine. A phosphoserine mark is found at serine 236, serine 289, and serine 290. The interval 287–316 (RSSSDYSQREDFEAAGSPFPGGPVSFPLAP) is disordered. The span at 302–313 (GSPFPGGPVSFP) shows a compositional bias: low complexity. Position 355 is a phosphoserine (serine 355).

The protein belongs to the POU transcription factor family. Class-5 subfamily. In terms of assembly, interacts with PKM. Interacts with WWP2. Interacts with UBE2I and ZSCAN10. Interacts with PCGF1. Interacts with ESRRB; recruits ESRRB near the POU5F1-SOX2 element in the NANOG proximal promoter; the interaction is DNA independent. Interacts with ZNF322. Interacts with MAPK8 and MAPK9; the interaction allows MAPK8 and MAPK9 to phosphorylate POU5F1 on Ser-355. Interacts (when phosphorylated on Ser-355) with FBXW8. Interacts with FBXW4. Interacts with SOX2 and SOX15; binds synergistically with either SOX2 or SOX15 to DNA. Interacts with DDX56. Sumoylation enhances the protein stability, DNA binding and transactivation activity. Sumoylation is required for enhanced YES1 expression. In terms of processing, ubiquitinated; undergoes 'Lys-63'-linked polyubiquitination by WWP2 leading to proteasomal degradation. Post-translationally, ERK1/2-mediated phosphorylation at Ser-111 promotes nuclear exclusion and proteasomal degradation. Phosphorylation at Thr-235 and Ser-236 decrease DNA-binding and alters ability to activate transcription.

The protein localises to the cytoplasm. The protein resides in the nucleus. Its function is as follows. Transcription factor that binds to the octamer motif (5'-ATTTGCAT-3'). Forms a trimeric complex with SOX2 or SOX15 on DNA and controls the expression of a number of genes involved in embryonic development such as YES1, FGF4, UTF1 and ZFP206. Critical for early embryogenesis and for embryonic stem cell pluripotency. This is POU domain, class 5, transcription factor 1 (POU5F1) from Sus scrofa (Pig).